Consider the following 122-residue polypeptide: Large ribosomal subunit protein uL14 (122 aa).

Belongs to the universal ribosomal protein uL14 family. In terms of assembly, part of the 50S ribosomal subunit. Forms a cluster with proteins L3 and L19. In the 70S ribosome, L14 and L19 interact and together make contacts with the 16S rRNA in bridges B5 and B8.

In terms of biological role, binds to 23S rRNA. Forms part of two intersubunit bridges in the 70S ribosome. The chain is Large ribosomal subunit protein uL14 from Shewanella halifaxensis (strain HAW-EB4).